The primary structure comprises 395 residues: MAEEPTYTTEQVDELIHAGLGTVDFFLSRPIDAQSSLGKGSIPPGVTAVLTSAAEAKSKPVAAGPVKPRRKKVISNTTPYTIADNIPPEKLPINTPIPNPLLPLARPHGKMTDIDIVTGNITEGSYKGVELAKLGKQTLLTRFTSNEPVSSAGSAQDPNFKRGGELIEKEQEATIGENGVLHGSEIRSKSSSGVIPGVPQSRPQLASSPAHADPAPASAENVKEIIELLKGLDLRLQTVEGKVDKILATSATIINLKNEMTSLKASVATVEGMITTIKIMDPSTPTNVPVEEIRKSLHNVPVVIAGPTSGGFTAEGSDMISMDELARPTLSSTKRITRKPESKKDLTGIKLTLMQLANDCISRPDTKTEFVTKIQAATTESQLNEIKRSIIRSAI.

The segment at 65 to 72 (PVKPRRKK) is nuclear localization signal (NLS). The disordered stretch occupies residues 178 to 217 (NGVLHGSEIRSKSSSGVIPGVPQSRPQLASSPAHADPAPA). The span at 206-217 (ASSPAHADPAPA) shows a compositional bias: low complexity. A nuclear export signal (NES) region spans residues 225 to 234 (IIELLKGLDL).

It belongs to the rubulavirus/avulavirus P protein family. In terms of assembly, interacts with host ARHGAP26; this interaction promotes host RHOA activation. Interacts with host KPNA1 and KPNA6.

It localises to the host cytoplasm. Essential component of the RNA polymerase and the nascent chain assembly complex. Also required during RNA synthesis. Also plays a role in viral growth by promoting host RHOA activation and thus actin formation via ARHGAP26 inhibition. The protein is Phosphoprotein (P/V) of Human parainfluenza 2 virus (HPIV-2).